The following is a 444-amino-acid chain: Glutamate--tRNA ligase 2 (444 aa).

Positions 8 to 18 (PSPTGHLHAGN) match the 'HIGH' region motif. A 'KMSKS' region motif is present at residues 241-245 (KLSKR). Residue Lys-244 coordinates ATP.

This sequence belongs to the class-I aminoacyl-tRNA synthetase family. Glutamate--tRNA ligase type 1 subfamily. Monomer.

The protein resides in the cytoplasm. It catalyses the reaction tRNA(Glu) + L-glutamate + ATP = L-glutamyl-tRNA(Glu) + AMP + diphosphate. Catalyzes the attachment of glutamate to tRNA(Glu) in a two-step reaction: glutamate is first activated by ATP to form Glu-AMP and then transferred to the acceptor end of tRNA(Glu). The sequence is that of Glutamate--tRNA ligase 2 from Acidiphilium cryptum (strain JF-5).